A 332-amino-acid polypeptide reads, in one-letter code: Aspartate carbamoyltransferase catalytic subunit (332 aa).

Carbamoyl phosphate contacts are provided by Arg-54 and Thr-55. Lys-82 serves as a coordination point for L-aspartate. Carbamoyl phosphate is bound by residues Arg-104, His-134, and Gln-137. Residues Arg-175 and Arg-230 each coordinate L-aspartate. Carbamoyl phosphate is bound by residues Gly-271 and Pro-272. A disordered region spans residues 312-332 (GGPDGDSTTSPGSGPEGGTTP).

This sequence belongs to the aspartate/ornithine carbamoyltransferase superfamily. ATCase family. As to quaternary structure, heterododecamer (2C3:3R2) of six catalytic PyrB chains organized as two trimers (C3), and six regulatory PyrI chains organized as three dimers (R2).

It catalyses the reaction carbamoyl phosphate + L-aspartate = N-carbamoyl-L-aspartate + phosphate + H(+). It participates in pyrimidine metabolism; UMP biosynthesis via de novo pathway; (S)-dihydroorotate from bicarbonate: step 2/3. Its function is as follows. Catalyzes the condensation of carbamoyl phosphate and aspartate to form carbamoyl aspartate and inorganic phosphate, the committed step in the de novo pyrimidine nucleotide biosynthesis pathway. This chain is Aspartate carbamoyltransferase catalytic subunit, found in Beutenbergia cavernae (strain ATCC BAA-8 / DSM 12333 / CCUG 43141 / JCM 11478 / NBRC 16432 / NCIMB 13614 / HKI 0122).